The sequence spans 280 residues: 30 kDa immediate-early protein 2 (280 aa).

A disordered region spans residues 36–164 (SEEEQGEEVE…KKSKRISELD (129 aa)). 3 stretches are compositionally biased toward low complexity: residues 47–67 (RGAT…TSPT), 90–101 (SSSSSSCSSASD), and 132–147 (AASS…SSGG).

Its function is as follows. Activates the E1.7 promoter. This activation is augmented by the IE1 protein. It down-regulates the transcription of genes under the control of the major IE promoter. This chain is 30 kDa immediate-early protein 2 (UL122), found in Human cytomegalovirus (strain Towne) (HHV-5).